We begin with the raw amino-acid sequence, 56 residues long: Large ribosomal subunit protein bL33 (56 aa).

This sequence belongs to the bacterial ribosomal protein bL33 family.

The sequence is that of Large ribosomal subunit protein bL33 from Dichelobacter nodosus (strain VCS1703A).